The primary structure comprises 148 residues: Gas vesicle protein J (148 aa).

2 disordered regions span residues 1-21 (MTTT…VIPT) and 118-148 (EETT…QLEA). Positions 136-148 (VNSQEGDNSQLEA) are enriched in polar residues.

The protein belongs to the gas vesicle GvpA family. In terms of assembly, interacts with GvpA.

It is found in the gas vesicle. A minor component of the gas vesicle, might be involved in nucleating gas vesicle formation. Gas vesicles (GV) are hollow, gas filled proteinaceous nanostructures. During planktonic growth they allow positioning of the organism at a favorable depth for light or nutrient acquisition. In terms of biological role, cluster expression in E.coli (gvpA1-gvpA2-gvpC-gvpN-gvpJ-gvpK-gvpF-gvpG-gvpV-gvpW) allows cells to float and produces irregularly shaped gas vesicles. The chain is Gas vesicle protein J from Nostoc sp. (strain PCC 7120 / SAG 25.82 / UTEX 2576).